The following is a 249-amino-acid chain: tRNA (guanine-N(1)-)-methyltransferase (249 aa).

S-adenosyl-L-methionine-binding positions include Gly-118 and 138 to 143 (IGDYVL).

This sequence belongs to the RNA methyltransferase TrmD family. Homodimer.

It is found in the cytoplasm. The enzyme catalyses guanosine(37) in tRNA + S-adenosyl-L-methionine = N(1)-methylguanosine(37) in tRNA + S-adenosyl-L-homocysteine + H(+). Its function is as follows. Specifically methylates guanosine-37 in various tRNAs. In Alkaliphilus oremlandii (strain OhILAs) (Clostridium oremlandii (strain OhILAs)), this protein is tRNA (guanine-N(1)-)-methyltransferase.